The primary structure comprises 186 residues: Acireductone dioxygenase (186 aa).

Positions 103, 105, 109, and 147 each coordinate Fe(2+). Ni(2+) is bound by residues His-103, His-105, Glu-109, and His-147.

The protein belongs to the acireductone dioxygenase (ARD) family. In terms of assembly, monomer. It depends on Fe(2+) as a cofactor. Ni(2+) serves as cofactor.

It catalyses the reaction 1,2-dihydroxy-5-(methylsulfanyl)pent-1-en-3-one + O2 = 3-(methylsulfanyl)propanoate + CO + formate + 2 H(+). The enzyme catalyses 1,2-dihydroxy-5-(methylsulfanyl)pent-1-en-3-one + O2 = 4-methylsulfanyl-2-oxobutanoate + formate + 2 H(+). The protein operates within amino-acid biosynthesis; L-methionine biosynthesis via salvage pathway; L-methionine from S-methyl-5-thio-alpha-D-ribose 1-phosphate: step 5/6. Catalyzes 2 different reactions between oxygen and the acireductone 1,2-dihydroxy-3-keto-5-methylthiopentene (DHK-MTPene) depending upon the metal bound in the active site. Fe-containing acireductone dioxygenase (Fe-ARD) produces formate and 2-keto-4-methylthiobutyrate (KMTB), the alpha-ketoacid precursor of methionine in the methionine recycle pathway. Ni-containing acireductone dioxygenase (Ni-ARD) produces methylthiopropionate, carbon monoxide and formate, and does not lie on the methionine recycle pathway. In Parasynechococcus marenigrum (strain WH8102), this protein is Acireductone dioxygenase.